Reading from the N-terminus, the 282-residue chain is Bifunctional protein FolD (282 aa).

Residues glycine 165–serine 167 and isoleucine 231 each bind NADP(+).

It belongs to the tetrahydrofolate dehydrogenase/cyclohydrolase family. As to quaternary structure, homodimer.

It carries out the reaction (6R)-5,10-methylene-5,6,7,8-tetrahydrofolate + NADP(+) = (6R)-5,10-methenyltetrahydrofolate + NADPH. The enzyme catalyses (6R)-5,10-methenyltetrahydrofolate + H2O = (6R)-10-formyltetrahydrofolate + H(+). The protein operates within one-carbon metabolism; tetrahydrofolate interconversion. Functionally, catalyzes the oxidation of 5,10-methylenetetrahydrofolate to 5,10-methenyltetrahydrofolate and then the hydrolysis of 5,10-methenyltetrahydrofolate to 10-formyltetrahydrofolate. The chain is Bifunctional protein FolD from Francisella tularensis subsp. mediasiatica (strain FSC147).